The following is a 1710-amino-acid chain: Latrophilin Cirl (1710 aa).

Residues 1–767 (MLPTILSISY…LFTMFDGNMR (767 aa)) are Extracellular-facing. Residues 25 to 114 (ACEGKKLTIE…KYLEAHYQCI (90 aa)) enclose the SUEL-type lectin domain. The N-linked (GlcNAc...) asparagine glycan is linked to asparagine 142. The segment at 183–304 (QHTAVTHSTP…SGSVVPGNGS (122 aa)) is disordered. 2 stretches are compositionally biased toward polar residues: residues 185–198 (TAVTHSTPSSSTTA) and 256–265 (NATSPSNTRI). N-linked (GlcNAc...) asparagine glycosylation is present at asparagine 256. 2 stretches are compositionally biased toward low complexity: residues 275–285 (DDGTLLTTKSS) and 295–304 (SGSVVPGNGS). N-linked (GlcNAc...) asparagine glycosylation is found at asparagine 302 and asparagine 341. The tract at residues 376–400 (YDEYDDDPSSTTPATSSADCLHNSS) is disordered. The span at 384 to 394 (SSTTPATSSAD) shows a compositional bias: low complexity. N-linked (GlcNAc...) asparagine glycans are attached at residues asparagine 398, asparagine 655, asparagine 703, and asparagine 730. In terms of domain architecture, GAIN-B spans 561–754 (RSVVQKVKNI…AILMDVVDEH (194 aa)). Cystine bridges form between cysteine 709–cysteine 736 and cysteine 724–cysteine 738. Residues 709 to 754 (CVFWNYIDHAWSANGCSLESTNRTHSVCSCNHLTNFAILMDVVDEH) form a GPS region. A helical membrane pass occupies residues 768-788 (IFIYISIGICVVFIVIALLTL). At 789–801 (KLFNGVFVKSART) the chain is on the cytoplasmic side. A helical transmembrane segment spans residues 802 to 822 (SIYTSIYLCLLAIELLFLLGI). The Extracellular portion of the chain corresponds to 823–828 (EQTETS). A helical transmembrane segment spans residues 829-849 (IFCGFITIFLHCAILSGTAWF). The Cytoplasmic segment spans residues 850 to 875 (CYEAFHSYSTLTSDELLLEVDQTPKV). The chain crosses the membrane as a helical span at residues 876–896 (NCYYLLSYGLSLSVVAISLVI). Residues 897–920 (DPSTYTQNDYCVLMEANALFYATF) are Extracellular-facing. The helical transmembrane segment at 921–941 (VMPVLVFFVAAIGYTFLSWII) threads the bilayer. Topologically, residues 942–968 (MCRKSRTGLKTKEHTRLASVRFDIRCS) are cytoplasmic. The chain crosses the membrane as a helical span at residues 969–989 (FVFLLLLSAVWCSAYFYLRGA). The Extracellular portion of the chain corresponds to 990-999 (KMDDDTADVY). A helical membrane pass occupies residues 1000 to 1020 (GYCFICFNTLLGLYIFVFHCI). Topologically, residues 1021-1710 (QNEKIRREYR…VRCYLEPLAK (690 aa)) are cytoplasmic. Phosphoserine occurs at positions 1156, 1253, 1260, 1329, and 1330. Residues 1234–1259 (KPNSGQHGKKKRGAGGVPASPSGSLH) are disordered. Disordered stretches follow at residues 1452–1540 (GGGS…SDER) and 1568–1690 (DYGA…QQRH). Over residues 1458–1483 (GGSVSSRSQQQQLKKQQQQQSLAQQR) the composition is skewed to low complexity. Acidic residues-rich tracts occupy residues 1491–1505 (DDDDDEDEEEDEEAT) and 1515–1528 (CDEDEEEDESDLED). Residues 1638-1650 (QTPAQKRQQLQKL) are compositionally biased toward polar residues. Low complexity predominate over residues 1651–1672 (SPQSTTSSSSHTSHSNPNPHPH). Basic residues predominate over residues 1673–1689 (QLTHPHPHQHPPHHQQR).

Belongs to the G-protein coupled receptor 2 family. LN-TM7 subfamily. Forms a heterodimer, consisting of a large extracellular region non-covalently linked to a seven-transmembrane moiety. Post-translationally, proteolytically cleaved into 2 subunits, an extracellular subunit and a seven-transmembrane subunit.

The protein resides in the cell membrane. The protein is Latrophilin Cirl of Drosophila erecta (Fruit fly).